Consider the following 90-residue polypeptide: Probable Fe(2+)-trafficking protein (90 aa).

The protein belongs to the Fe(2+)-trafficking protein family.

Could be a mediator in iron transactions between iron acquisition and iron-requiring processes, such as synthesis and/or repair of Fe-S clusters in biosynthetic enzymes. This Verminephrobacter eiseniae (strain EF01-2) protein is Probable Fe(2+)-trafficking protein.